The sequence spans 261 residues: MVNLPDNVHEESFANNNASLISRLENSAFNKSNFEYLKTCINFFEKKSVNYTVVALPCSGDERKASKRPKRVNNHNMYILFNSFYTKIRRPEWPNSPTMWDTVKAHKELSDFVRVFDHTQKLGKSITSRSASSSSFTETNGKRRRSVITNVAEVQENCDQRDKLYSEFYSLLNETFKTGVAPATSNIYDSVITRELLTKNMELFKNIALKLPSPSYVPTPVSNKKRRAPPSAPKKIAKQRRDTKPPPTYVSDNTQDTNMSE.

The segment at 215-261 is disordered; sequence SYVPTPVSNKKRRAPPSAPKKIAKQRRDTKPPPTYVSDNTQDTNMSE. Over residues 250-261 the composition is skewed to polar residues; sequence VSDNTQDTNMSE.

This Orgyia pseudotsugata multicapsid polyhedrosis virus (OpMNPV) protein is Early 39 kDa protein.